We begin with the raw amino-acid sequence, 227 residues long: Type II restriction enzyme HhaII (227 aa).

In terms of assembly, homodimer.

The enzyme catalyses Endonucleolytic cleavage of DNA to give specific double-stranded fragments with terminal 5'-phosphates.. In terms of biological role, a P subtype restriction enzyme that recognizes the double-stranded sequence 5'-GANTC-3' and cleaves after G-1. The chain is Type II restriction enzyme HhaII (hhaIIR) from Haemophilus parahaemolyticus.